The chain runs to 365 residues: MRAIIIGIGQCGTKIADIFSLVDFEALAINTSKSDLEYLKHIPPERRILVGESIVGGKGVNANPLLGREAMKRDLPMVMKKISSLVGYEDVDIFFLTFGFGGGTGAGGTPVLAEALKEEYPDSLVVAIGALPLKEEGIRPTINAAITIDKLSRIVDSIIAIDNNKLKESDEDISQAYEKINYAIVERIASLLALIDVPGEQTLDASDLKFVLRAMGSFATVGYAKADATKIKSLSRLIIRSFENEGLYLDVNLESALYGLVAIHGPPEVLKAKEIFDALSELSQRIRGKQIFRGFYPDPREREVEVVTLLSGIYESKSIENIVITAKRYAREFMKAKEEGEMKKRELLKGLPDFEDIYPGEVDEG.

GTP contacts are provided by residues 10 to 14 (QCGTK), 103 to 105 (GTG), glutamate 136, asparagine 163, and asparagine 181.

It belongs to the CetZ family.

The protein resides in the cytoplasm. In terms of biological role, involved in cell shape control. This is Tubulin-like protein CetZ from Pyrococcus horikoshii (strain ATCC 700860 / DSM 12428 / JCM 9974 / NBRC 100139 / OT-3).